A 1801-amino-acid chain; its full sequence is Laminin subunit beta-2 (1801 aa).

The first 35 residues, 1–35 (MEWASGKPGRGRQGQPVPWELRLGLLLSVLAATLA), serve as a signal peptide directing secretion. The 240-residue stretch at 46–285 (SRGSCYPATG…ALYELVIRGN (240 aa)) folds into the Laminin N-terminal domain. An N-linked (GlcNAc...) asparagine glycan is attached at N251. 19 cysteine pairs are disulfide-bonded: C286/C295, C288/C313, C315/C324, C327/C347, C350/C359, C352/C377, C380/C389, C392/C410, C413/C426, C415/C441, C443/C452, C455/C470, C473/C487, C475/C494, C496/C505, C508/C522, C525/C537, C527/C544, and C546/C555. Laminin EGF-like domains lie at 286–349 (CFCY…ACRK), 350–412 (CECN…ACRP), 413–472 (CDCD…GCQR), and 473–524 (CQCN…GCRP). Residue N371 is glycosylated (N-linked (GlcNAc...) asparagine). Positions 525-555 (CDCDVGGALDPQCDEATGQCPCRPHMIGRRC) constitute a Laminin EGF-like 5; truncated domain. A Laminin IV type B domain is found at 564–780 (RPFLDHLTWE…LLISASSLVY (217 aa)). Cystine bridges form between C786-C798, C788-C805, C807-C816, C819-C831, C834-C846, C836-C853, C855-C864, C867-C877, C880-C889, C882-C896, C899-C908, C911-C927, C930-C946, C932-C957, C959-C968, C971-C986, C989-C1003, C991-C1010, C1013-C1022, C1025-C1038, C1041-C1061, C1043-C1068, C1070-C1079, C1082-C1095, C1098-C1110, C1100-C1117, C1119-C1128, C1131-C1143, C1146-C1158, C1148-C1165, C1167-C1176, and C1179-C1190. Laminin EGF-like domains are found at residues 786–833 (CQCD…GCQA), 834–879 (CQCS…NCRP), 880–929 (CVCN…QCRP), 930–988 (CPCP…RCQL), 989–1040 (CECS…SCHR), 1041–1097 (CTCN…GCQP), 1098–1145 (CACH…QCRA), and 1146–1192 (CDCD…ACHP). Residue N1088 is glycosylated (N-linked (GlcNAc...) asparagine). The segment at 1193–1412 (CHACFGDWDR…LSLTGVNELV (220 aa)) is domain II. N1252 is a glycosylation site (N-linked (GlcNAc...) asparagine). Residues 1259–1306 (AKLVEATEGLRHEIGKTTERLTQLEAELTDVQDENFNANHALSGLERD) adopt a coiled-coil conformation. N-linked (GlcNAc...) asparagine glycosylation is found at N1311 and N1351. The interval 1413–1445 (CGAPGDAPCATSPCGGAGCRDEDGQPRCGGLGC) is domain alpha. The segment at 1446 to 1801 (SGAAATADLA…LQVQIYNTCQ (356 aa)) is domain I. The stretch at 1475–1529 (GILSRVSETRRQAEEAQQRAQAALDKANASRGQVEQANQELRELIQNVKDFLSQE) forms a coiled coil. N1502 carries N-linked (GlcNAc...) asparagine glycosylation. S1535 is modified (phosphoserine). A coiled-coil region spans residues 1576–1793 (LAHTMGDVRR…RSVLQAINLQ (218 aa)). Residues 1684–1694 (ASTAEETAGSA) show a composition bias toward low complexity. A disordered region spans residues 1684 to 1703 (ASTAEETAGSAQSRAREAEK).

In terms of assembly, laminin is a complex glycoprotein, consisting of three different polypeptide chains (alpha, beta, gamma), which are bound to each other by disulfide bonds into a cross-shaped molecule comprising one long and three short arms with globules at each end. Beta-2 is a subunit of laminin-3 (laminin-121 or S-laminin), laminin-4 (laminin-221 or S-merosin), laminin-7 (laminin-321 or KS-laminin), laminin-9 (laminin-421), laminin-11 (laminin-521), laminin-14 (laminin-423) and laminin-15 (laminin-523). As to expression, found in the basement membranes (major component). S-laminin is concentrated in the synaptic cleft of the neuromuscular junction.

The protein resides in the secreted. Its subcellular location is the extracellular space. The protein localises to the extracellular matrix. It localises to the basement membrane. Functionally, binding to cells via a high affinity receptor, laminin is thought to mediate the attachment, migration and organization of cells into tissues during embryonic development by interacting with other extracellular matrix components. In Rattus norvegicus (Rat), this protein is Laminin subunit beta-2 (Lamb2).